A 457-amino-acid chain; its full sequence is UDP-N-acetylmuramoylalanine--D-glutamate ligase (457 aa).

126 to 132 serves as a coordination point for ATP; that stretch reads GTAGKGS.

This sequence belongs to the MurCDEF family.

The protein resides in the cytoplasm. It catalyses the reaction UDP-N-acetyl-alpha-D-muramoyl-L-alanine + D-glutamate + ATP = UDP-N-acetyl-alpha-D-muramoyl-L-alanyl-D-glutamate + ADP + phosphate + H(+). Its pathway is cell wall biogenesis; peptidoglycan biosynthesis. Its function is as follows. Cell wall formation. Catalyzes the addition of glutamate to the nucleotide precursor UDP-N-acetylmuramoyl-L-alanine (UMA). The protein is UDP-N-acetylmuramoylalanine--D-glutamate ligase of Deinococcus radiodurans (strain ATCC 13939 / DSM 20539 / JCM 16871 / CCUG 27074 / LMG 4051 / NBRC 15346 / NCIMB 9279 / VKM B-1422 / R1).